We begin with the raw amino-acid sequence, 997 residues long: Sorting nexin-19 (997 aa).

The region spanning 95 to 273 (ERQLEQEINR…ILVSIFSKYR (179 aa)) is the PXA domain. Disordered stretches follow at residues 313–333 (SSPA…SPEI) and 413–437 (GALE…APGT). Residues 422–435 (GSECMEGAEAEEAP) show a composition bias toward acidic residues. One can recognise a PX domain in the interval 538 to 668 (LRITGTITAR…EFLALNTDAR (131 aa)). Residues arginine 587 and arginine 634 each coordinate a 1,2-diacyl-sn-glycero-3-phospho-(1D-myo-inositol-3-phosphate). The disordered stretch occupies residues 697–728 (FPRSEPQSPTEELSEAENESKPQTEGKKASKS). Over residues 714-724 (NESKPQTEGKK) the composition is skewed to basic and acidic residues.

The protein belongs to the sorting nexin family. As to quaternary structure, interacts with PTPRN.

The protein localises to the early endosome membrane. Its subcellular location is the cytoplasmic vesicle membrane. Plays a role in intracellular vesicle trafficking and exocytosis. May play a role in maintaining insulin-containing dense core vesicles in pancreatic beta-cells and in preventing their degradation. May play a role in insulin secretion. Interacts with membranes containing phosphatidylinositol 3-phosphate (PtdIns(3P)). The polypeptide is Sorting nexin-19 (Mus musculus (Mouse)).